A 489-amino-acid chain; its full sequence is Beta-glucosidase 14 (489 aa).

Residues 1–21 form the signal peptide; it reads MTSKYFSVLVFIILASNEVVA. Glutamine 49 provides a ligand contact to a beta-D-glucoside. N-linked (GlcNAc...) asparagine glycosylation occurs at asparagine 80. A beta-D-glucoside-binding positions include histidine 153 and 198 to 199; that span reads NE. The Proton donor role is filled by glutamate 199. An intrachain disulfide couples cysteine 218 to cysteine 226. Asparagine 225 carries an N-linked (GlcNAc...) asparagine glycan. Tyrosine 343 serves as a coordination point for a beta-D-glucoside. Asparagine 357 carries N-linked (GlcNAc...) asparagine glycosylation. Residues glutamate 396, tryptophan 441, 448–449, and phenylalanine 457 contribute to the a beta-D-glucoside site; that span reads EW. Catalysis depends on glutamate 396, which acts as the Nucleophile.

Belongs to the glycosyl hydrolase 1 family.

The enzyme catalyses Hydrolysis of terminal, non-reducing beta-D-glucosyl residues with release of beta-D-glucose.. This Arabidopsis thaliana (Mouse-ear cress) protein is Beta-glucosidase 14.